The following is a 311-amino-acid chain: Ribonuclease HIII (311 aa).

The region spanning methionine 95–lysine 311 is the RNase H type-2 domain. The a divalent metal cation site is built by aspartate 101, glutamate 102, and aspartate 206.

Belongs to the RNase HII family. RnhC subfamily. Mn(2+) serves as cofactor. It depends on Mg(2+) as a cofactor.

It localises to the cytoplasm. It carries out the reaction Endonucleolytic cleavage to 5'-phosphomonoester.. Functionally, endonuclease that specifically degrades the RNA of RNA-DNA hybrids. The sequence is that of Ribonuclease HIII from Bacillus anthracis (strain A0248).